An 887-amino-acid chain; its full sequence is 3-hydroxy-3-methylglutaryl-coenzyme A reductase (887 aa).

The Cytoplasmic segment spans residues 1–9; it reads MLSRLFRMH. Residues 10-39 traverse the membrane as a helical segment; that stretch reads GLFVASHPWEVIVGTVTLTICMMSMNMFTG. Residues 40–56 are Lumenal-facing; sequence NNKICGWNYECPKFEED. Residues 57-78 traverse the membrane as a helical segment; that stretch reads VLSSDIIILTITRCIAILYIYF. The SSD domain maps to 61–218; the sequence is DIIILTITRC…MTFFPACVSL (158 aa). Residues 75–78 carry the INSIG-binding motif motif; sequence YIYF. The Cytoplasmic portion of the chain corresponds to 79-89; the sequence is QFQNLRQLGSK. Lysine 89 participates in a covalent cross-link: Glycyl lysine isopeptide (Lys-Gly) (interchain with G-Cter in ubiquitin). A helical transmembrane segment spans residues 90–114; it reads YILGIAGLFTIFSSFVFSTVVIHFL. Over 115–123 the chain is Lumenal; the sequence is DKELTGLNE. Residues 124 to 149 traverse the membrane as a helical segment; that stretch reads ALPFFLLLIDLSRASALAKFALSSNS. Residues 150 to 159 are Cytoplasmic-facing; the sequence is QDEVRENIAR. A helical membrane pass occupies residues 160-187; that stretch reads GMAILGPTFTLDALVECLVIGVGTMSGV. At 188-191 the chain is on the lumenal side; the sequence is RQLE. A helical membrane pass occupies residues 192-220; it reads IMCCFGCMSVLANYFVFMTFFPACVSLVL. Topologically, residues 221-248 are cytoplasmic; that stretch reads ELSRESREGRPIWQLSHFARVLEEEENK. Residue lysine 248 forms a Glycyl lysine isopeptide (Lys-Gly) (interchain with G-Cter in ubiquitin) linkage. Residues 249–275 traverse the membrane as a helical segment; the sequence is PNPVTQRVKMIMSLGLVLVHAHSRWIA. The Lumenal portion of the chain corresponds to 276 to 314; it reads DPSPQNSTAEQSKVSLGLAEDVSKRIEPSVSLWQFYLSK. Residue asparagine 281 is glycosylated (N-linked (GlcNAc...) asparagine). Residues 315-339 form a helical membrane-spanning segment; the sequence is MISMDIEQVITLSLALLLAVKYIFF. Topologically, residues 340–887 are cytoplasmic; it reads EQAETESTLS…LQGTCTKKAA (548 aa). Residues glutamate 558, lysine 690, and aspartate 766 each act as charge relay system in the active site. The active-site Proton donor is the histidine 865. Serine 871 carries the phosphoserine; by AMPK modification.

The protein belongs to the HMG-CoA reductase family. Homotetramer. Homodimer. Interacts (via its SSD) with INSIG1; the interaction, accelerated by sterols, leads to the recruitment of HMGCR to AMFR/gp78 for its ubiquitination by the sterol-mediated ERAD pathway. Interacts with UBIAD1. In terms of processing, undergoes sterol-mediated ubiquitination and ER-associated degradation (ERAD). Accumulation of sterols in the endoplasmic reticulum (ER) membrane, triggers binding of the reductase to the ER membrane protein INSIG1 or INSIG2. The INSIG1 binding leads to the recruitment of the ubiquitin ligase, AMFR/gp78, RNF139 or RNF145, initiating ubiquitination of the reductase. The ubiquitinated reductase is then extracted from the ER membrane and delivered to cytosolic 26S proteosomes by a mechanism probably mediated by the ATPase Valosin-containing protein VCP/p97. The INSIG2-binding leads to the recruitment of the ubiquitin ligase RNF139, initiating ubiquitination of the reductase. Lys-248 is the main site of ubiquitination. Ubiquitination is enhanced by the presence of a geranylgeranylated protein. N-glycosylated. Deglycosylated by NGLY1 on release from the endoplasmic reticulum (ER) in a sterol-mediated manner. Post-translationally, phosphorylated. Phosphorylation at Ser-871 reduces the catalytic activity.

It is found in the endoplasmic reticulum membrane. It localises to the peroxisome membrane. It carries out the reaction (R)-mevalonate + 2 NADP(+) + CoA = (3S)-3-hydroxy-3-methylglutaryl-CoA + 2 NADPH + 2 H(+). The protein operates within metabolic intermediate biosynthesis; (R)-mevalonate biosynthesis; (R)-mevalonate from acetyl-CoA: step 3/3. Regulated by a negative feedback mechanism through sterols and non-sterol metabolites derived from mevalonate. Phosphorylation at Ser-871 down-regulates the catalytic activity. In terms of biological role, catalyzes the conversion of (3S)-hydroxy-3-methylglutaryl-CoA (HMG-CoA) to mevalonic acid, the rate-limiting step in the synthesis of cholesterol and other isoprenoids, thus plays a critical role in cellular cholesterol homeostasis. This Rattus norvegicus (Rat) protein is 3-hydroxy-3-methylglutaryl-coenzyme A reductase (Hmgcr).